A 378-amino-acid chain; its full sequence is Fructose-1,6-bisphosphatase class 1 2 (378 aa).

Residues Glu98, Asp120, Leu122, and Asp123 each coordinate Mg(2+). Substrate contacts are provided by residues 123 to 126 (DGSS) and Asn227. Residue Glu299 coordinates Mg(2+).

This sequence belongs to the FBPase class 1 family. As to quaternary structure, homotetramer. The cofactor is Mg(2+).

Its subcellular location is the cytoplasm. The enzyme catalyses beta-D-fructose 1,6-bisphosphate + H2O = beta-D-fructose 6-phosphate + phosphate. Its pathway is carbohydrate biosynthesis; gluconeogenesis. This chain is Fructose-1,6-bisphosphatase class 1 2, found in Paraburkholderia xenovorans (strain LB400).